The sequence spans 504 residues: Maturase K (504 aa).

The protein belongs to the intron maturase 2 family. MatK subfamily.

Its subcellular location is the plastid. The protein localises to the chloroplast. Functionally, usually encoded in the trnK tRNA gene intron. Probably assists in splicing its own and other chloroplast group II introns. This Ochroma pyramidale (Balsa) protein is Maturase K.